The sequence spans 339 residues: NADH-quinone oxidoreductase subunit H (339 aa).

9 consecutive transmembrane segments (helical) span residues Ile9 to Cys29, Pro50 to Phe70, Ile82 to Ile102, Val115 to Gly135, Met161 to Ile181, Met187 to Leu207, Met235 to Thr255, Ile275 to Ile295, and Gly311 to Val331.

Belongs to the complex I subunit 1 family. As to quaternary structure, NDH-1 is composed of 14 different subunits. Subunits NuoA, H, J, K, L, M, N constitute the membrane sector of the complex.

Its subcellular location is the cell inner membrane. It catalyses the reaction a quinone + NADH + 5 H(+)(in) = a quinol + NAD(+) + 4 H(+)(out). NDH-1 shuttles electrons from NADH, via FMN and iron-sulfur (Fe-S) centers, to quinones in the respiratory chain. The immediate electron acceptor for the enzyme in this species is believed to be ubiquinone. Couples the redox reaction to proton translocation (for every two electrons transferred, four hydrogen ions are translocated across the cytoplasmic membrane), and thus conserves the redox energy in a proton gradient. This subunit may bind ubiquinone. The polypeptide is NADH-quinone oxidoreductase subunit H (Rickettsia conorii (strain ATCC VR-613 / Malish 7)).